Here is a 79-residue protein sequence, read N- to C-terminus: D-alanyl carrier protein (79 aa).

The Carrier domain maps to 1 to 77 (MDIKSEVLKI…KIIEGITELR (77 aa)). Residue S35 is modified to O-(pantetheine 4'-phosphoryl)serine.

The protein belongs to the DltC family. 4'-phosphopantetheine is transferred from CoA to a specific serine of apo-DCP.

It is found in the cytoplasm. The protein operates within cell wall biogenesis; lipoteichoic acid biosynthesis. Its function is as follows. Carrier protein involved in the D-alanylation of lipoteichoic acid (LTA). The loading of thioester-linked D-alanine onto DltC is catalyzed by D-alanine--D-alanyl carrier protein ligase DltA. The DltC-carried D-alanyl group is further transferred to cell membrane phosphatidylglycerol (PG) by forming an ester bond, probably catalyzed by DltD. D-alanylation of LTA plays an important role in modulating the properties of the cell wall in Gram-positive bacteria, influencing the net charge of the cell wall. The protein is D-alanyl carrier protein of Streptococcus mutans serotype c (strain ATCC 700610 / UA159).